The following is a 452-amino-acid chain: Bone morphogenetic protein 5 (452 aa).

A signal peptide spans 1 to 25 (MHWTVFLLRGIVGFLWSGWVQVGYA). The propeptide occupies 26 to 314 (KGGLGDNHVH…ASEVLLRSVR (289 aa)). N-linked (GlcNAc...) asparagine glycosylation is found at Asn-209, Asn-325, Asn-343, and Asn-393. Residues 316–345 (ASKRKNQNRNKSNSHQDPSRMPSAGDYNTS) form a disordered region. 3 disulfides stabilise this stretch: Cys-351–Cys-417, Cys-380–Cys-449, and Cys-384–Cys-451.

This sequence belongs to the TGF-beta family. As to quaternary structure, interacts with ERFE; the interaction inhibits BMP-induced transcription of HAMP.

Its subcellular location is the secreted. Growth factor of the TGF-beta superfamily that plays essential roles in many developmental processes, including cartilage and bone formation or neurogenesis. Initiates the canonical BMP signaling cascade by associating with type I receptor BMPR1A and type II receptor BMPR2. In turn, BMPR1A propagates signal by phosphorylating SMAD1/5/8 that travel to the nucleus and act as activators and repressors of transcription of target genes. Can also signal through non-canonical pathway such as MAPK p38 signaling cascade to promote chondrogenic differentiation. Promotes the expression of HAMP, this is repressed by its interaction with ERFE. The chain is Bone morphogenetic protein 5 (Bmp5) from Mus musculus (Mouse).